Reading from the N-terminus, the 388-residue chain is Probable pectin lyase F-1 (388 aa).

Residues 1 to 19 form the signal peptide; sequence MKTATFSTLLALSASAVNA. An intrachain disulfide couples Cys-80 to Cys-103. N-linked (GlcNAc...) asparagine glycosylation occurs at Asn-126. Residue Arg-253 is part of the active site. Residues Cys-328 and Cys-336 are joined by a disulfide bond.

Belongs to the polysaccharide lyase 1 family.

Its subcellular location is the secreted. The catalysed reaction is Eliminative cleavage of (1-&gt;4)-alpha-D-galacturonan methyl ester to give oligosaccharides with 4-deoxy-6-O-methyl-alpha-D-galact-4-enuronosyl groups at their non-reducing ends.. Pectinolytic enzymes consist of four classes of enzymes: pectin lyase, polygalacturonase, pectin methylesterase and rhamnogalacturonase. Among pectinolytic enzymes, pectin lyase is the most important in depolymerization of pectin, since it cleaves internal glycosidic bonds of highly methylated pectins. This Aspergillus terreus (strain NIH 2624 / FGSC A1156) protein is Probable pectin lyase F-1 (pelF-1).